The sequence spans 328 residues: Helicase VP6-A (328 aa).

2 disordered regions span residues aspartate 31 to asparagine 128 and valine 180 to isoleucine 237. 3 stretches are compositionally biased toward basic and acidic residues: residues glutamate 36–asparagine 61, alanine 71–isoleucine 83, and proline 96–glycine 109. Lysine 110 is a binding site for ATP. Gly residues predominate over residues lysine 110 to asparagine 128. Composition is skewed to basic and acidic residues over residues valine 180–arginine 205 and proline 214–glutamate 230.

The protein belongs to the orbivirus VP6 family. As to quaternary structure, homohexamer.

It is found in the virion. It carries out the reaction ATP + H2O = ADP + phosphate + H(+). Its function is as follows. ATP dependent RNA helicase essential for RNA packaging and viral transcription. Possesses ss- and dsRNA-binding capacity. This is Helicase VP6-A (Segment-9) from Bluetongue virus 1 (isolate South Africa) (BTV 1).